A 480-amino-acid polypeptide reads, in one-letter code: tRNA (guanine(37)-N(1))-methyltransferase (480 aa).

Residues His244, 292–293, 321–322, and Asn342 contribute to the S-adenosyl-L-methionine site; these read DL and DG.

This sequence belongs to the class I-like SAM-binding methyltransferase superfamily. TRM5/TYW2 family. As to quaternary structure, monomer.

The protein resides in the mitochondrion matrix. Its subcellular location is the nucleus. It localises to the cytoplasm. The enzyme catalyses guanosine(37) in tRNA + S-adenosyl-L-methionine = N(1)-methylguanosine(37) in tRNA + S-adenosyl-L-homocysteine + H(+). Its function is as follows. Specifically methylates the N1 position of guanosine-37 in various cytoplasmic and mitochondrial tRNAs. Methylation is not dependent on the nature of the nucleoside 5' of the target nucleoside. This is the first step in the biosynthesis of wybutosine (yW), a modified base adjacent to the anticodon of tRNAs and required for accurate decoding. The protein is tRNA (guanine(37)-N(1))-methyltransferase of Thalassiosira pseudonana (Marine diatom).